Consider the following 545-residue polypeptide: Glucose-6-phosphate isomerase (545 aa).

The active-site Proton donor is Glu351. Active-site residues include His382 and Lys510.

It belongs to the GPI family.

The protein resides in the cytoplasm. The catalysed reaction is alpha-D-glucose 6-phosphate = beta-D-fructose 6-phosphate. It participates in carbohydrate biosynthesis; gluconeogenesis. It functions in the pathway carbohydrate degradation; glycolysis; D-glyceraldehyde 3-phosphate and glycerone phosphate from D-glucose: step 2/4. Catalyzes the reversible isomerization of glucose-6-phosphate to fructose-6-phosphate. The protein is Glucose-6-phosphate isomerase of Shewanella baltica (strain OS185).